Consider the following 161-residue polypeptide: Protein-export protein SecB (161 aa).

The protein belongs to the SecB family. As to quaternary structure, homotetramer, a dimer of dimers. One homotetramer interacts with 1 SecA dimer.

It localises to the cytoplasm. Functionally, one of the proteins required for the normal export of preproteins out of the cell cytoplasm. It is a molecular chaperone that binds to a subset of precursor proteins, maintaining them in a translocation-competent state. It also specifically binds to its receptor SecA. The polypeptide is Protein-export protein SecB (Bradyrhizobium diazoefficiens (strain JCM 10833 / BCRC 13528 / IAM 13628 / NBRC 14792 / USDA 110)).